The chain runs to 262 residues: Indole-3-glycerol phosphate synthase (262 aa).

This sequence belongs to the TrpC family.

It catalyses the reaction 1-(2-carboxyphenylamino)-1-deoxy-D-ribulose 5-phosphate + H(+) = (1S,2R)-1-C-(indol-3-yl)glycerol 3-phosphate + CO2 + H2O. It participates in amino-acid biosynthesis; L-tryptophan biosynthesis; L-tryptophan from chorismate: step 4/5. This Thiobacillus denitrificans (strain ATCC 25259 / T1) protein is Indole-3-glycerol phosphate synthase.